A 735-amino-acid chain; its full sequence is Muskelin (735 aa).

An N-acetylalanine modification is found at Ala-2. One can recognise a LisH domain in the interval 172–204; that stretch reads REQEAIRLCLKHFRQHNYTEAFESLQKKTKIAL. Positions 206–258 constitute a CTLH domain; sequence HPMLTDMHDKLVLKGDFDACEELIEKAVNDGLFNQYISQQEYKPRWSQIIPKS. 6 Kelch repeats span residues 284–330, 339–391, 400–458, 469–515, 526–578, and 597–651; these read TVYL…SCHK, QIYT…FDHQ, MIYT…SRIG, CLYV…TGFT, EIHV…SLQE, and VHYL…AQMD. Residues 701 to 735 form an important for location in the cytosol region; sequence DHTYAQRTQLFDTLVNFFPDSMTPPKGNLVDLITL.

Homodimer; may form higher oligomers. Identified in the CTLH complex that contains GID4, RANBP9 and/or RANBP10, MKLN1, MAEA, RMND5A (or alternatively its paralog RMND5B), GID8, ARMC8, WDR26 and YPEL5. Within this complex, MAEA, RMND5A (or alternatively its paralog RMND5B), GID8, WDR26, and RANBP9 and/or RANBP10 form the catalytic core, while GID4, MKLN1, ARMC8 and YPEL5 have ancillary roles. Interacts with RANBP9. Part of a complex consisting of RANBP9, MKLN1 and GID8. Interacts with GABRA1. Interacts with the C-terminal tail of PTGER3. Detected in brain, especially in hippocampus and cerebellum (at protein level).

It localises to the cytoplasm. It is found in the cytosol. The protein localises to the nucleus. The protein resides in the nucleoplasm. Its subcellular location is the cell projection. It localises to the ruffle. It is found in the cell cortex. The protein localises to the synapse. The protein resides in the postsynapse. In terms of biological role, component of the CTLH E3 ubiquitin-protein ligase complex that selectively accepts ubiquitin from UBE2H and mediates ubiquitination and subsequent proteasomal degradation of the transcription factor HBP1. Required for internalization of the GABA receptor GABRA1 from the cell membrane via endosomes and subsequent GABRA1 degradation. Acts as a mediator of cell spreading and cytoskeletal responses to the extracellular matrix component THBS1. The sequence is that of Muskelin (Mkln1) from Mus musculus (Mouse).